We begin with the raw amino-acid sequence, 270 residues long: UPF0354 protein BT9727_4425 (270 aa).

Belongs to the UPF0354 family.

In Bacillus thuringiensis subsp. konkukian (strain 97-27), this protein is UPF0354 protein BT9727_4425.